A 983-amino-acid polypeptide reads, in one-letter code: Probable beta-galactosidase C (983 aa).

An N-terminal signal peptide occupies residues 1–23 (MRIFSFLFLLLLGILTGQGLVSG). Tyr82, Asn127, Ala128, Glu129, and Asn187 together coordinate substrate. Glu188 functions as the Proton donor in the catalytic mechanism. The N-linked (GlcNAc...) asparagine glycan is linked to Asn197. Residue Tyr251 coordinates substrate. Cys257 and Cys304 form a disulfide bridge. N-linked (GlcNAc...) asparagine glycosylation is present at Asn276. Glu287 (nucleophile) is an active-site residue. Tyr353 is a substrate binding site. Residues Asn391, Asn434, Asn466, Asn516, Asn601, Asn676, Asn714, Asn719, Asn758, and Asn804 are each glycosylated (N-linked (GlcNAc...) asparagine).

Belongs to the glycosyl hydrolase 35 family.

Its subcellular location is the secreted. The catalysed reaction is Hydrolysis of terminal non-reducing beta-D-galactose residues in beta-D-galactosides.. Cleaves beta-linked terminal galactosyl residues from gangliosides, glycoproteins, and glycosaminoglycans. The polypeptide is Probable beta-galactosidase C (lacC) (Aspergillus fumigatus (strain CBS 144.89 / FGSC A1163 / CEA10) (Neosartorya fumigata)).